The chain runs to 239 residues: Ribonuclease P protein component 3 (239 aa).

Belongs to the eukaryotic/archaeal RNase P protein component 3 family. Consists of a catalytic RNA component and at least 4-5 protein subunits.

It localises to the cytoplasm. The catalysed reaction is Endonucleolytic cleavage of RNA, removing 5'-extranucleotides from tRNA precursor.. In terms of biological role, part of ribonuclease P, a protein complex that generates mature tRNA molecules by cleaving their 5'-ends. This is Ribonuclease P protein component 3 from Methanosarcina mazei (strain ATCC BAA-159 / DSM 3647 / Goe1 / Go1 / JCM 11833 / OCM 88) (Methanosarcina frisia).